A 181-amino-acid polypeptide reads, in one-letter code: MPNYYLADDTKYTRPSTSAMSNLTELCGLKGLADSMARFDPVTGEKNKLRKSYKNQLLDLTGKFDIPSQPSLVRIIRDPVLAETGGKSLSVFDRDLLSRGLDFDATPSTGIPGFNPAMLGMPGPGKPGIGPQVGGNRLLSVRRSYNTESARESSNNEETPMARRKRKGDDDTDGERRRKRK.

Residues 120-181 (GMPGPGKPGI…TDGERRRKRK (62 aa)) form a disordered region. Residues 122-133 (PGPGKPGIGPQV) are compositionally biased toward gly residues. The span at 143-158 (RSYNTESARESSNNEE) shows a compositional bias: polar residues.

This sequence belongs to the Mediator complex subunit 19 family. In terms of assembly, component of the Mediator complex.

It is found in the nucleus. Component of the Mediator complex, a coactivator involved in the regulated transcription of nearly all RNA polymerase II-dependent genes. Mediator functions as a bridge to convey information from gene-specific regulatory proteins to the basal RNA polymerase II transcription machinery. Mediator is recruited to promoters by direct interactions with regulatory proteins and serves as a scaffold for the assembly of a functional preinitiation complex with RNA polymerase II and the general transcription factors. This is Mediator of RNA polymerase II transcription subunit 19 (ROX3) from Yarrowia lipolytica (strain CLIB 122 / E 150) (Yeast).